Here is a 1341-residue protein sequence, read N- to C-terminus: uncharacterized protein (1341 aa).

The segment at residues 41–68 is a DNA-binding region (zn(2)-C6 fungal-type); the sequence is CLLCRRRKQRCDHKLPSCTACLKAGIKC. Low complexity-rich tracts occupy residues 72–93, 779–791, 864–906, 920–967, and 1036–1050; these read SKYS…AGTV, SNSA…SNSN, SNSS…NDNN, NHNN…GNNS, and SPSK…SSHS. 4 disordered regions span residues 72–100, 770–804, 864–971, and 1031–1116; these read SKYS…PHPV, ISSG…MPPA, SNSS…QYVR, and TMTN…NSNP. The segment covering 1057–1076 has biased composition (polar residues); it reads MTQSPTPYPQTSNMLPQQHV. Residues 1078 to 1090 are compositionally biased toward low complexity; sequence RPLPQQQREQPQQ. The span at 1091 to 1116 shows a compositional bias: polar residues; it reads HITSPQRFSESNFTNQLNNGMINSNP. Ser1143 bears the Phosphoserine mark. Polar residues predominate over residues 1220 to 1230; it reads SQEPSSLSMDK. Residues 1220-1240 form a disordered region; the sequence is SQEPSSLSMDKQQQQHQQQNM.

It localises to the nucleus. This is an uncharacterized protein from Saccharomyces cerevisiae (strain ATCC 204508 / S288c) (Baker's yeast).